The following is a 762-amino-acid chain: 5-methyltetrahydropteroyltriglutamate--homocysteine methyltransferase (762 aa).

5-methyltetrahydropteroyltri-L-glutamate is bound by residues 17–20 and K111; that span reads REWK. L-homocysteine-binding positions include 435 to 437 and E488; that span reads IGS. Residues 435 to 437 and E488 contribute to the L-methionine site; that span reads IGS. Residues 519–520 and W565 contribute to the 5-methyltetrahydropteroyltri-L-glutamate site; that span reads RC. L-homocysteine is bound at residue D603. D603 serves as a coordination point for L-methionine. A 5-methyltetrahydropteroyltri-L-glutamate-binding site is contributed by E609. Zn(2+) is bound by residues H645, C647, and E669. Residue H698 is the Proton donor of the active site. Position 730 (C730) interacts with Zn(2+).

This sequence belongs to the vitamin-B12 independent methionine synthase family. Zn(2+) serves as cofactor.

The catalysed reaction is 5-methyltetrahydropteroyltri-L-glutamate + L-homocysteine = tetrahydropteroyltri-L-glutamate + L-methionine. It functions in the pathway amino-acid biosynthesis; L-methionine biosynthesis via de novo pathway; L-methionine from L-homocysteine (MetE route): step 1/1. Catalyzes the transfer of a methyl group from 5-methyltetrahydrofolate to homocysteine resulting in methionine formation. In Bacillus cereus (strain ATCC 10987 / NRS 248), this protein is 5-methyltetrahydropteroyltriglutamate--homocysteine methyltransferase.